Here is a 185-residue protein sequence, read N- to C-terminus: Ribosome-recycling factor (185 aa).

This sequence belongs to the RRF family.

The protein resides in the cytoplasm. Responsible for the release of ribosomes from messenger RNA at the termination of protein biosynthesis. May increase the efficiency of translation by recycling ribosomes from one round of translation to another. This Pseudomonas fluorescens (strain ATCC BAA-477 / NRRL B-23932 / Pf-5) protein is Ribosome-recycling factor.